We begin with the raw amino-acid sequence, 366 residues long: Histidinol-phosphate aminotransferase (366 aa).

Lysine 228 carries the post-translational modification N6-(pyridoxal phosphate)lysine.

This sequence belongs to the class-II pyridoxal-phosphate-dependent aminotransferase family. Histidinol-phosphate aminotransferase subfamily. In terms of assembly, homodimer. Pyridoxal 5'-phosphate is required as a cofactor.

The catalysed reaction is L-histidinol phosphate + 2-oxoglutarate = 3-(imidazol-4-yl)-2-oxopropyl phosphate + L-glutamate. The protein operates within amino-acid biosynthesis; L-histidine biosynthesis; L-histidine from 5-phospho-alpha-D-ribose 1-diphosphate: step 7/9. This Corynebacterium glutamicum (strain R) protein is Histidinol-phosphate aminotransferase.